Reading from the N-terminus, the 205-residue chain is Small ribosomal subunit protein uS4 (205 aa).

The span at 1-16 shows a compositional bias: basic and acidic residues; the sequence is MSKRESSKYKIDRRMG. The segment at 1–46 is disordered; it reads MSKRESSKYKIDRRMGENIWGRPKSPVNRREYGPGQHGQRRKSKLS. An S4 RNA-binding domain is found at 94–157; it reads SRLDAIVYRA…KQLVTVLEAV (64 aa).

Belongs to the universal ribosomal protein uS4 family. As to quaternary structure, part of the 30S ribosomal subunit. Contacts protein S5. The interaction surface between S4 and S5 is involved in control of translational fidelity.

Its function is as follows. One of the primary rRNA binding proteins, it binds directly to 16S rRNA where it nucleates assembly of the body of the 30S subunit. With S5 and S12 plays an important role in translational accuracy. This Rhizobium meliloti (strain 1021) (Ensifer meliloti) protein is Small ribosomal subunit protein uS4.